We begin with the raw amino-acid sequence, 1166 residues long: MEISDQNQYIPYNCLNNPESEIFNARNSNFGLVSQVSSGLTRFLLEAAVPEAGFALGLFDIIWGALGVDQWSLFLRQIEQLIRQEITELERNRATAILTGLSSSYNLYVEALREWENDPNNPASQERVRTRFRLTDDAIVTGLPTLAIRNLEVVNLSVYTQAANLHLSLLRDAVYFGERWGLTQANIEDLYTRLTSNIQEYSDHCARWYNQGLNEIGGISRRYLDFQRDLTISVLDIVALFPNYDIRTYPIPTQSQLTREIYTSPVVAGNINFGLSIANVLRAPHLMDFIDRIVIYTNSVRSTPYWAGHEVISRRTGQGQGNEIRFPLYGVAANAEPPVTIRPTGFTDEQRQWYRARSRVVSFRSSGQDFSLVDAVGFLTIFSAVSIYRNGFGFNTDTIDEIPIEGTDPFTGYSHRLCHVGFLASSPFISQYARAPIFSWTHRSATLTNTIAPDVITQIPLVKAFNLHSGATIVKGPGFTGGDILRRTNVGSFGDMRVNITAPLSQRYRVRIRYASTTDLQFYTNINGTTINIGNFSSTMDSGDDLQYGRFRVAGFTTPFTFSDANSTFTIGAFGFSPNNEVYIDRIEFVPAEVTFEAEYDLEKAQKAVNALFTSSNQIGLKTDVTDYHIDKVSNLVECLSDEFCLDEKRELSEKVKHAKRLSDERNLLQDPNFRGINRQPDRGWRGSTDITIQGGDDVFKENYVTLPGTFDGCYPTYLYQKIDESKLKVYTRYQLRGYIEDSQDLEIYLIRYNAKHETVNVPGTGSLWPLSAQSPIGKCGEPNRCAPHLEWNPDLDCSCRNGEKCAHHSHHFSLDIDVGCTDLNEDLGVWVIFKIKTQDGHARLGNLEFLEEKPLLGEALARVKRAEKKWRDKREKLELETNIVYKEAKESVDALFVNSQYDQLQADTNIAMIHAADKRVHSIREAYLPELSVIPGVNAAIFEELEGRIFTAFSLYDARNVIKNGDFNNGLSCWNVKGHVDVEEQNNHRSVLVVPEWEAEVSQEVRVCPGRGYILRVTAYKEGYGEGCVTIHEIENNTDELKFSNCVEEEVYPNNTVTCNDYTANQEEYKGAYTSHNRGYDEAYGNNPSVPADYTPVYEEKAYTDGRRENPCESNRGYGDYTPLPAGYVTKELEYFPETDKVWIEIGETEGTFIVESVELLLMEE.

The protein belongs to the delta endotoxin family.

Promotes colloidosmotic lysis by binding to the midgut epithelial cells of insects. The polypeptide is Pesticidal crystal protein Cry1Ga (cry1Ga) (Bacillus thuringiensis).